Reading from the N-terminus, the 285-residue chain is Polyamine aminopropyltransferase (285 aa).

One can recognise a PABS domain in the interval 5–241 (DNWYIEHFQP…GWWSVTMASK (237 aa)). Residue Gln-35 participates in S-methyl-5'-thioadenosine binding. Residues His-66 and Asp-90 each coordinate spermidine. S-methyl-5'-thioadenosine contacts are provided by residues Asp-110 and 141 to 142 (DG). Asp-160 acts as the Proton acceptor in catalysis. Spermidine is bound at residue 160–163 (DSTD). Position 167 (Pro-167) interacts with S-methyl-5'-thioadenosine.

The protein belongs to the spermidine/spermine synthase family. Homodimer or homotetramer.

The protein localises to the cytoplasm. The enzyme catalyses S-adenosyl 3-(methylsulfanyl)propylamine + putrescine = S-methyl-5'-thioadenosine + spermidine + H(+). It participates in amine and polyamine biosynthesis; spermidine biosynthesis; spermidine from putrescine: step 1/1. Functionally, catalyzes the irreversible transfer of a propylamine group from the amino donor S-adenosylmethioninamine (decarboxy-AdoMet) to putrescine (1,4-diaminobutane) to yield spermidine. The chain is Polyamine aminopropyltransferase from Xanthomonas euvesicatoria pv. vesicatoria (strain 85-10) (Xanthomonas campestris pv. vesicatoria).